The following is a 1223-amino-acid chain: DNA-directed RNA polymerase subunit beta'' (1223 aa).

Cys-233, Cys-307, Cys-314, and Cys-317 together coordinate Zn(2+).

It belongs to the RNA polymerase beta' chain family. RpoC2 subfamily. In plastids the minimal PEP RNA polymerase catalytic core is composed of four subunits: alpha, beta, beta', and beta''. When a (nuclear-encoded) sigma factor is associated with the core the holoenzyme is formed, which can initiate transcription. Zn(2+) serves as cofactor.

The protein resides in the plastid. It is found in the chloroplast. The enzyme catalyses RNA(n) + a ribonucleoside 5'-triphosphate = RNA(n+1) + diphosphate. Functionally, DNA-dependent RNA polymerase catalyzes the transcription of DNA into RNA using the four ribonucleoside triphosphates as substrates. The chain is DNA-directed RNA polymerase subunit beta'' from Mesostigma viride (Green alga).